The sequence spans 918 residues: Band 3 anion exchange protein (918 aa).

The segment at 1–48 is disordered; the sequence is MENDLSFGEDVMSYEEESDSAFPSPIRPTPPGHSGNYDLEQSRQEEDS. Over 1 to 392 the chain is Cytoplasmic; it reads MENDLSFGED…ISDFTDALDP (392 aa). Residues 393-416 traverse the membrane as a helical segment; that stretch reads QVLAAVIFIYFAALSPAITFGGLL. Residues 417–424 are Extracellular-facing; the sequence is ADKTEHMM. Residues 425–445 traverse the membrane as a helical segment; that stretch reads GVSELMISTCVQGIIFAFIAA. Residues 446–448 are Cytoplasmic-facing; sequence QPT. Residues 449-465 form a discontinuously helical membrane-spanning segment; the sequence is LVIGFSGPLLVFEEAFF. Residues 466 to 474 are Extracellular-facing; it reads AFCKSQEIE. A helical membrane pass occupies residues 475 to 495; it reads YIVGRIWVGLWLVIIVVVIVA. The Cytoplasmic portion of the chain corresponds to 496–507; that stretch reads VEGSFLVKFISR. A helical transmembrane segment spans residues 508–530; it reads FTQEIFSILISLIFIYETFSKLG. At 531–583 the chain is on the extracellular side; the sequence is KIFKAHPLVLNYEHLNDSLDNPFHPVVKEHIEYHEDGNKTVHEVIHERAYPNT. Asn546 and Asn568 each carry an N-linked (GlcNAc...) asparagine glycan. The chain crosses the membrane as a helical span at residues 584–604; it reads ALLSMCLMFGCFFIAYFLRQF. Topologically, residues 605-615 are cytoplasmic; it reads KNGHFLPGPIR. Residues 616 to 636 traverse the membrane as a helical segment; sequence RMIGDFGVPIAIFFMIAVDIT. At 637–676 the chain is on the extracellular side; it reads IEDAYTQKLVVPKGLMVSNPNARGWFINPLGEKKPFPAWM. The chain crosses the membrane as a helical span at residues 677-697; the sequence is MGACCVPALLVFILIFLESQI. Residues 698-713 lie on the Cytoplasmic side of the membrane; that stretch reads TTLIVSKPERKMVKGS. Residues 714–732 form a helical membrane-spanning segment; it reads GFHLDLLILVTMGGIASLF. The discontinuously helical transmembrane segment at 733 to 750 threads the bilayer; the sequence is GVPWLSAATVRSVTHANA. Topologically, residues 751–769 are cytoplasmic; that stretch reads LTVMSKGPKPEIEKVLEQR. Helical transmembrane passes span 770–790 and 791–809; these read ISGMLVAAMVGVSILLEPILK and MIPMTALFGIFLYMGITSL. The Cytoplasmic segment spans residues 810-847; that stretch reads SGIQMWDRMLLLIVPRKYYPADAYAQRVTTMKMHLFTL. The segment at residues 848 to 878 is an intramembrane region (discontinuously helical); the sequence is IQMVCLGALWMVKMSAFSLALPFVLILTIPL. Residue Cys852 is the site of S-palmitoyl cysteine attachment. The Cytoplasmic segment spans residues 879 to 918; it reads RMAITGTLFTDKEMKCLDASDGKVKFEEEPGEDMYESPLP.

It belongs to the anion exchanger (TC 2.A.31) family. A dimer in solution, it spans the membrane asymmetrically and appears to be tetrameric.

The protein localises to the cell membrane. It carries out the reaction hydrogencarbonate(in) + chloride(out) = hydrogencarbonate(out) + chloride(in). Functions both as a transporter that mediates electroneutral anion exchange across the cell membrane and as a structural protein. Major integral membrane glycoprotein of the erythrocyte membrane; required for normal flexibility and stability of the erythrocyte membrane and for normal erythrocyte shape via the interactions of its cytoplasmic domain with cytoskeletal proteins, glycolytic enzymes, and hemoglobin. Functions as a transporter that mediates the 1:1 exchange of inorganic anions across the erythrocyte membrane. Mediates chloride-bicarbonate exchange in the kidney, and is required for normal acidification of the urine. In Oncorhynchus mykiss (Rainbow trout), this protein is Band 3 anion exchange protein (slc4a1).